We begin with the raw amino-acid sequence, 229 residues long: Flagellar brake protein YcgR (229 aa).

Residues 134–218 (QLSLRVLDVS…GERALQRYID (85 aa)) enclose the PilZ domain.

This sequence belongs to the YcgR family. Monomer. Interacts with the flagellar basal bodies.

It localises to the bacterial flagellum basal body. Acts as a flagellar brake, regulating swimming and swarming in a bis-(3'-5') cyclic diguanylic acid (c-di-GMP)-dependent manner. Binds 1 c-di-GMP dimer per subunit. Increasing levels of c-di-GMP lead to decreased motility. This is Flagellar brake protein YcgR from Methylibium petroleiphilum (strain ATCC BAA-1232 / LMG 22953 / PM1).